We begin with the raw amino-acid sequence, 215 residues long: Redox-sensing transcriptional repressor Rex (215 aa).

A DNA-binding region (H-T-H motif) is located at residues 18–57 (LYYRFLKNLHASGKQRVSSAELSEAVKVDPATIRRDFSYF). 92 to 97 (GVGNLG) lines the NAD(+) pocket.

Belongs to the transcriptional regulatory Rex family. Homodimer.

Its subcellular location is the cytoplasm. In terms of biological role, modulates transcription in response to changes in cellular NADH/NAD(+) redox state. In Geobacillus sp. (strain WCH70), this protein is Redox-sensing transcriptional repressor Rex.